A 390-amino-acid polypeptide reads, in one-letter code: MLSLESIKKAPRADGFASILAIGRANPDNIIEQSAYPDFYFRVTNSEHLVDLKKKFQRICEKTAIRKRHFVWNEEFLTANPCFSTFMDKSLNVRQEVAISEIPKLGAKAATKAIEDWGQPKSRITHLIFCTTSGMDLPGADYQLTQILGLNPNVERVMLYQQGCFAGGTTLRLAKCLAESRKGARVLVVCAETTTVLFRAPSEEHQDDLVTQALFADGASAVIVGADPDEAADERASFVIVSTSQVLLPDSAGAIGGHVSEGGLLATLHRDVPQIVSKNVGKCLEEAFTPFGISDWNSIFWVPHPGGRAILDQVEERVGLKPEKLSVSRHVLAEYGNMSSVCVHFALDEMRKRSANEGKATTGEGLEWGVLFGFGPGLTVETVVLRSVPL.

Residue C164 is part of the active site.

This sequence belongs to the thiolase-like superfamily. Chalcone/stilbene synthases family.

The enzyme catalyses 3-(3-hydroxyphenyl)-propanoyl-CoA + 3 malonyl-CoA + 3 H(+) = 3,3',5-trihydroxybibenzyl + 4 CO2 + 4 CoA. This Phalaenopsis sp. (Moth orchid) protein is Bibenzyl synthase (BIBSY212).